The following is a 191-amino-acid chain: MKLKLIVGLSNPINLYYNTRHNIGSWYIKFLAKKYKKNLIKNKKYCFYYIDVKIGDYYSKLVIPDTYMNVNGTIIYNITNFYKIYSNEMLIVHDDLDLDTGIARFKFNHKNSTHNGIKSIYKSFGAKCIFNTLRIGIGRPKLNKNINSYLLNNPSPKEEILIKKTITKCIKCTDVLIKKNKDHAMNILHKK.

Tyr16 provides a ligand contact to tRNA. The active-site Proton acceptor is the His21. TRNA contacts are provided by Tyr67, Asn69, and Asn115.

The protein belongs to the PTH family. As to quaternary structure, monomer.

Its subcellular location is the cytoplasm. It catalyses the reaction an N-acyl-L-alpha-aminoacyl-tRNA + H2O = an N-acyl-L-amino acid + a tRNA + H(+). Its function is as follows. Hydrolyzes ribosome-free peptidyl-tRNAs (with 1 or more amino acids incorporated), which drop off the ribosome during protein synthesis, or as a result of ribosome stalling. In terms of biological role, catalyzes the release of premature peptidyl moieties from peptidyl-tRNA molecules trapped in stalled 50S ribosomal subunits, and thus maintains levels of free tRNAs and 50S ribosomes. This Wigglesworthia glossinidia brevipalpis protein is Peptidyl-tRNA hydrolase.